We begin with the raw amino-acid sequence, 367 residues long: DNA polymerase IV (367 aa).

The UmuC domain occupies 14 to 198 (IIHIDMDAFF…LPIEKFHGVG (185 aa)). Asp-18 and Asp-116 together coordinate Mg(2+). Glu-117 is a catalytic residue.

This sequence belongs to the DNA polymerase type-Y family. In terms of assembly, monomer. Mg(2+) serves as cofactor.

It is found in the cytoplasm. It catalyses the reaction DNA(n) + a 2'-deoxyribonucleoside 5'-triphosphate = DNA(n+1) + diphosphate. Functionally, poorly processive, error-prone DNA polymerase involved in untargeted mutagenesis. Copies undamaged DNA at stalled replication forks, which arise in vivo from mismatched or misaligned primer ends. These misaligned primers can be extended by PolIV. Exhibits no 3'-5' exonuclease (proofreading) activity. May be involved in translesional synthesis, in conjunction with the beta clamp from PolIII. The sequence is that of DNA polymerase IV from Streptococcus thermophilus (strain CNRZ 1066).